Consider the following 526-residue polypeptide: Berberine bridge enzyme-like 11 (526 aa).

The signal sequence occupies residues 1–21; that stretch reads MEKLLIICMLLISVLVATSQS. C31 and C94 are joined by a disulfide. 4 N-linked (GlcNAc...) asparagine glycosylation sites follow: N52, N136, N273, and N482. Residues 72 to 247 enclose the FAD-binding PCMH-type domain; that stretch reads TTPKPIAIIT…MGYKIRLVPV (176 aa). Positions 109–171 form a cross-link, 6-(S-cysteinyl)-8alpha-(pros-histidyl)-FAD (His-Cys); that stretch reads HDFEGLSYTS…NVLGFPAGLC (63 aa).

Belongs to the oxygen-dependent FAD-linked oxidoreductase family. Requires FAD as cofactor. Post-translationally, the FAD cofactor is bound via a bicovalent 6-S-cysteinyl, 8alpha-N1-histidyl FAD linkage.

It is found in the secreted. Its subcellular location is the cell wall. This chain is Berberine bridge enzyme-like 11, found in Arabidopsis thaliana (Mouse-ear cress).